The primary structure comprises 545 residues: Chaperonin GroEL (545 aa).

ATP contacts are provided by residues T29 to P32, D86 to T90, G413, N476 to A478, and D492.

It belongs to the chaperonin (HSP60) family. As to quaternary structure, forms a cylinder of 14 subunits composed of two heptameric rings stacked back-to-back. Interacts with the co-chaperonin GroES.

The protein resides in the cytoplasm. It catalyses the reaction ATP + H2O + a folded polypeptide = ADP + phosphate + an unfolded polypeptide.. Its function is as follows. Together with its co-chaperonin GroES, plays an essential role in assisting protein folding. The GroEL-GroES system forms a nano-cage that allows encapsulation of the non-native substrate proteins and provides a physical environment optimized to promote and accelerate protein folding. The chain is Chaperonin GroEL from Oceanobacillus iheyensis (strain DSM 14371 / CIP 107618 / JCM 11309 / KCTC 3954 / HTE831).